The sequence spans 339 residues: Large ribosomal subunit protein uL10 (339 aa).

The segment at 305 to 339 is disordered; sequence TQPQQEEKVEEAEEEEEEEEASEEDALAGLGALFG. Residues 312–330 show a composition bias toward acidic residues; sequence KVEEAEEEEEEEEASEEDA.

Belongs to the universal ribosomal protein uL10 family. In terms of assembly, part of the 50S ribosomal subunit. Forms part of the ribosomal stalk which helps the ribosome interact with GTP-bound translation factors. Forms a heptameric L10(L12)2(L12)2(L12)2 complex, where L10 forms an elongated spine to which the L12 dimers bind in a sequential fashion.

Forms part of the ribosomal stalk, playing a central role in the interaction of the ribosome with GTP-bound translation factors. This is Large ribosomal subunit protein uL10 from Thermococcus onnurineus (strain NA1).